A 461-amino-acid polypeptide reads, in one-letter code: Acetylornithine aminotransferase, mitochondrial (461 aa).

The interval 36-56 (YATASQLTHPDPTEDSPSGKM) is disordered. Residue Lys-312 is modified to N6-(pyridoxal phosphate)lysine.

This sequence belongs to the class-III pyridoxal-phosphate-dependent aminotransferase family. Requires pyridoxal 5'-phosphate as cofactor.

It localises to the mitochondrion matrix. The catalysed reaction is N(2)-acetyl-L-ornithine + 2-oxoglutarate = N-acetyl-L-glutamate 5-semialdehyde + L-glutamate. It functions in the pathway amino-acid biosynthesis; L-arginine biosynthesis; N(2)-acetyl-L-ornithine from L-glutamate: step 4/4. The protein is Acetylornithine aminotransferase, mitochondrial (arg-8) of Neurospora crassa (strain ATCC 24698 / 74-OR23-1A / CBS 708.71 / DSM 1257 / FGSC 987).